We begin with the raw amino-acid sequence, 347 residues long: Protein RecA (347 aa).

64–71 (GPESSGKT) contributes to the ATP binding site.

The protein belongs to the RecA family.

It localises to the cytoplasm. Its function is as follows. Can catalyze the hydrolysis of ATP in the presence of single-stranded DNA, the ATP-dependent uptake of single-stranded DNA by duplex DNA, and the ATP-dependent hybridization of homologous single-stranded DNAs. It interacts with LexA causing its activation and leading to its autocatalytic cleavage. In Bartonella tribocorum (strain CIP 105476 / IBS 506), this protein is Protein RecA.